We begin with the raw amino-acid sequence, 567 residues long: DNA ligase (567 aa).

Glu246 serves as a coordination point for ATP. The N6-AMP-lysine intermediate role is filled by Lys248. ATP-binding residues include Arg253, Arg268, Glu298, Phe339, Arg415, and Lys421.

Belongs to the ATP-dependent DNA ligase family. Mg(2+) is required as a cofactor.

It catalyses the reaction ATP + (deoxyribonucleotide)n-3'-hydroxyl + 5'-phospho-(deoxyribonucleotide)m = (deoxyribonucleotide)n+m + AMP + diphosphate.. Functionally, DNA ligase that seals nicks in double-stranded DNA during DNA replication, DNA recombination and DNA repair. The polypeptide is DNA ligase (Nanoarchaeum equitans (strain Kin4-M)).